The sequence spans 173 residues: Crossover junction endodeoxyribonuclease RuvC (173 aa).

Residues D8, E67, and D139 contribute to the active site. Residues D8, E67, and D139 each contribute to the Mg(2+) site.

The protein belongs to the RuvC family. As to quaternary structure, homodimer which binds Holliday junction (HJ) DNA. The HJ becomes 2-fold symmetrical on binding to RuvC with unstacked arms; it has a different conformation from HJ DNA in complex with RuvA. In the full resolvosome a probable DNA-RuvA(4)-RuvB(12)-RuvC(2) complex forms which resolves the HJ. Requires Mg(2+) as cofactor.

The protein resides in the cytoplasm. It carries out the reaction Endonucleolytic cleavage at a junction such as a reciprocal single-stranded crossover between two homologous DNA duplexes (Holliday junction).. The RuvA-RuvB-RuvC complex processes Holliday junction (HJ) DNA during genetic recombination and DNA repair. Endonuclease that resolves HJ intermediates. Cleaves cruciform DNA by making single-stranded nicks across the HJ at symmetrical positions within the homologous arms, yielding a 5'-phosphate and a 3'-hydroxyl group; requires a central core of homology in the junction. The consensus cleavage sequence is 5'-(A/T)TT(C/G)-3'. Cleavage occurs on the 3'-side of the TT dinucleotide at the point of strand exchange. HJ branch migration catalyzed by RuvA-RuvB allows RuvC to scan DNA until it finds its consensus sequence, where it cleaves and resolves the cruciform DNA. The protein is Crossover junction endodeoxyribonuclease RuvC of Pseudoalteromonas atlantica (strain T6c / ATCC BAA-1087).